A 165-amino-acid chain; its full sequence is Phosphopantetheine adenylyltransferase (165 aa).

A substrate-binding site is contributed by threonine 9. ATP contacts are provided by residues 9–10 (TF) and histidine 17. The substrate site is built by lysine 41, leucine 73, and arginine 87. ATP is bound by residues 88-90 (GLR), glutamate 98, and 123-129 (YQFISGT).

This sequence belongs to the bacterial CoaD family. Homohexamer. Requires Mg(2+) as cofactor.

It is found in the cytoplasm. The catalysed reaction is (R)-4'-phosphopantetheine + ATP + H(+) = 3'-dephospho-CoA + diphosphate. It participates in cofactor biosynthesis; coenzyme A biosynthesis; CoA from (R)-pantothenate: step 4/5. Reversibly transfers an adenylyl group from ATP to 4'-phosphopantetheine, yielding dephospho-CoA (dPCoA) and pyrophosphate. This is Phosphopantetheine adenylyltransferase from Burkholderia vietnamiensis (strain G4 / LMG 22486) (Burkholderia cepacia (strain R1808)).